Here is a 999-residue protein sequence, read N- to C-terminus: Probable basic-leucine zipper transcription factor N (999 aa).

2 stretches are compositionally biased toward low complexity: residues 1-79 (MYQS…YQQQ) and 88-126 (NNVN…INNN). The disordered stretch occupies residues 1–126 (MYQSIPQQGN…NNNNGNINNN (126 aa)). Coiled coils occupy residues 148-198 (QQQQ…MVLM) and 232-282 (GIQQ…QQIS). Over residues 286-302 (ESASPYYSTPIQSNTML) the composition is skewed to polar residues. Disordered stretches follow at residues 286–406 (ESAS…SQDQ), 450–533 (QQLH…PTIN), and 601–620 (EKQK…NYRQ). The segment covering 303–347 (SIPSSPGIPSSIPQLNNSNNINNNSNNNNNNNNNNNNNNINYNSN) has biased composition (low complexity). Residues 348 to 406 (MASNFISQHSNNGSNTSSPVPQTTYLQNSGGNFNAYNGSNTNSPITPSSYLQPTTSQDQ) show a composition bias toward polar residues. A coiled-coil region spans residues 423 to 451 (IQQQQKILQQQQQQQLLLQQQIQQQQQQQ). Residues 450 to 517 (QQLHQPQSPQ…IIQPTTIQPQ (68 aa)) are compositionally biased toward low complexity. A bZIP domain is found at 601 to 664 (EKQKTRRRAS…KKLLHENNIL (64 aa)). Residues 602 to 632 (KQKTRRRASQNLASRNYRQRKKQYVNEVEDR) form a basic motif region. A leucine-zipper region spans residues 636 to 643 (IVQENERL). 3 disordered regions span residues 665–711 (KSGG…VVET), 779–807 (QSCP…SPYE), and 870–899 (VNNG…TTTT). The segment covering 682–692 (SEDEDEDDFDQ) has biased composition (acidic residues). Residues 921–950 (HLVQLSGLLDKLKENIDHENETLIQTYEKL) adopt a coiled-coil conformation.

It belongs to the bZIP family.

The protein localises to the nucleus. In terms of biological role, probable transcriptional regulator. This chain is Probable basic-leucine zipper transcription factor N (bzpN), found in Dictyostelium discoideum (Social amoeba).